The following is an 86-amino-acid chain: Serine protease inhibitor Kazal-type 9 (86 aa).

Positions methionine 1–serine 19 are cleaved as a signal peptide. Residues threonine 26–cysteine 86 enclose the Kazal-like domain. Cystine bridges form between cysteine 32–cysteine 68, cysteine 46–cysteine 65, and cysteine 54–cysteine 86.

In terms of assembly, dimer. Interacts with KLK5 and KLK8. As to expression, skin. Highly expressed at sites of hyperkeratosis. Also detected in thymus, tonsils, testis, pancreas, liver, placenta and brain. Expressed at stratum granulosum and stratum corneum at palmar and plantar sites (at protein level).

It localises to the secreted. Functionally, serine protease inhibitor which specifically inhibits KLK5. May contribute to the regulation of the desquamation process in skin by inhibiting KLK5. The sequence is that of Serine protease inhibitor Kazal-type 9 (SPINK9) from Homo sapiens (Human).